Reading from the N-terminus, the 210-residue chain is Putative cutinase (210 aa).

A compositionally biased stretch (basic and acidic residues) spans 26–38 (DSERLPLKRDEPG). The disordered stretch occupies residues 26 to 58 (DSERLPLKRDEPGSRSMRSTFIPSSQCSNLSSA). Residues 49–58 (SSQCSNLSSA) are compositionally biased toward low complexity.

The enzyme catalyses cutin + H2O = cutin monomers.. The protein is Putative cutinase of Phytophthora capsici.